The primary structure comprises 463 residues: UDP-N-acetylmuramoylalanine--D-glutamate ligase (463 aa).

Position 116 to 122 (116 to 122) interacts with ATP; the sequence is GTNGKTT.

Belongs to the MurCDEF family.

The protein localises to the cytoplasm. The catalysed reaction is UDP-N-acetyl-alpha-D-muramoyl-L-alanine + D-glutamate + ATP = UDP-N-acetyl-alpha-D-muramoyl-L-alanyl-D-glutamate + ADP + phosphate + H(+). The protein operates within cell wall biogenesis; peptidoglycan biosynthesis. Functionally, cell wall formation. Catalyzes the addition of glutamate to the nucleotide precursor UDP-N-acetylmuramoyl-L-alanine (UMA). The chain is UDP-N-acetylmuramoylalanine--D-glutamate ligase from Synechococcus elongatus (strain ATCC 33912 / PCC 7942 / FACHB-805) (Anacystis nidulans R2).